We begin with the raw amino-acid sequence, 176 residues long: Large ribosomal subunit protein uL6 (176 aa).

It belongs to the universal ribosomal protein uL6 family. As to quaternary structure, part of the 50S ribosomal subunit.

This protein binds to the 23S rRNA, and is important in its secondary structure. It is located near the subunit interface in the base of the L7/L12 stalk, and near the tRNA binding site of the peptidyltransferase center. The sequence is that of Large ribosomal subunit protein uL6 from Dechloromonas aromatica (strain RCB).